The chain runs to 149 residues: Deoxyuridine 5'-triphosphate nucleotidohydrolase (149 aa).

Substrate-binding positions include 68 to 70 (RSG), Asn81, 85 to 87 (LID), and Met95.

The protein belongs to the dUTPase family. Requires Mg(2+) as cofactor.

The catalysed reaction is dUTP + H2O = dUMP + diphosphate + H(+). The protein operates within pyrimidine metabolism; dUMP biosynthesis; dUMP from dCTP (dUTP route): step 2/2. Functionally, this enzyme is involved in nucleotide metabolism: it produces dUMP, the immediate precursor of thymidine nucleotides and it decreases the intracellular concentration of dUTP so that uracil cannot be incorporated into DNA. This Bordetella avium (strain 197N) protein is Deoxyuridine 5'-triphosphate nucleotidohydrolase.